Reading from the N-terminus, the 688-residue chain is Alpha-1,4-glucan:maltose-1-phosphate maltosyltransferase (688 aa).

Alpha-maltose 1-phosphate-binding residues include lysine 289, glutamine 349, and aspartate 384. The Nucleophile role is filled by aspartate 420. Residue asparagine 421 coordinates alpha-maltose 1-phosphate. Catalysis depends on glutamate 449, which acts as the Proton donor. 560-561 serves as a coordination point for alpha-maltose 1-phosphate; the sequence is KY.

It belongs to the glycosyl hydrolase 13 family. GlgE subfamily. As to quaternary structure, homodimer.

It catalyses the reaction alpha-maltose 1-phosphate + [(1-&gt;4)-alpha-D-glucosyl](n) = [(1-&gt;4)-alpha-D-glucosyl](n+2) + phosphate. Maltosyltransferase that uses maltose 1-phosphate (M1P) as the sugar donor to elongate linear or branched alpha-(1-&gt;4)-glucans. Is involved in a branched alpha-glucan biosynthetic pathway from trehalose, together with TreS, Mak and GlgB. The polypeptide is Alpha-1,4-glucan:maltose-1-phosphate maltosyltransferase (Rhodospirillum rubrum (strain ATCC 11170 / ATH 1.1.1 / DSM 467 / LMG 4362 / NCIMB 8255 / S1)).